A 613-amino-acid chain; its full sequence is Zinc metalloproteinase-disintegrin-like atragin (613 aa).

Positions 1–20 (MIQALLVIICLAVFPHQGSS) are cleaved as a signal peptide. Residues 21-191 (IILESGNVND…DESIEKTSQL (171 aa)) constitute a propeptide that is removed on maturation. The Peptidase M12B domain occupies 205-400 (KYIEFYVVVD…DRPQCILNKP (196 aa)). Ca(2+) is bound by residues Glu-208 and Asp-292. Cystine bridges form between Cys-316–Cys-395 and Cys-356–Cys-379. 3 residues coordinate Zn(2+): His-341, His-345, and His-351. Residues Cys-395, Asn-398, Ile-410, Asn-413, Phe-415, Glu-417, Glu-420, and Asp-423 each coordinate Ca(2+). The Disintegrin domain occupies 408–494 (PPICGNYFVE…ECPTDVFQRN (87 aa)). 15 disulfide bridges follow: Cys-411/Cys-440, Cys-422/Cys-435, Cys-424/Cys-430, Cys-434/Cys-457, Cys-448/Cys-454, Cys-453/Cys-479, Cys-466/Cys-486, Cys-473/Cys-505, Cys-498/Cys-510, Cys-517/Cys-567, Cys-532/Cys-575, Cys-542/Cys-577, Cys-545/Cys-555, Cys-562/Cys-601, and Cys-595/Cys-606. N-linked (GlcNAc...) asparagine glycosylation is present at Asn-436. The short motif at 472-474 (DCD) is the D/ECD-tripeptide element. Ca(2+)-binding residues include Asp-474, Leu-475, Glu-477, Asp-489, and Val-490. The hypervariable region that may play important roles toward cell migration stretch occupies residues 560–574 (VKCGRLFCKRRNSMI).

This sequence belongs to the venom metalloproteinase (M12B) family. P-III subfamily. P-IIIa sub-subfamily. Monomer. It depends on Zn(2+) as a cofactor. As to expression, expressed by the venom gland.

It is found in the secreted. In terms of biological role, snake venom zinc metalloproteinase that seems to inhibit cell migration. This activity is dominated by the local structure of the hyper-variable region. The chain is Zinc metalloproteinase-disintegrin-like atragin from Naja atra (Chinese cobra).